The chain runs to 253 residues: Indole-3-glycerol phosphate synthase (253 aa).

Belongs to the TrpC family.

It carries out the reaction 1-(2-carboxyphenylamino)-1-deoxy-D-ribulose 5-phosphate + H(+) = (1S,2R)-1-C-(indol-3-yl)glycerol 3-phosphate + CO2 + H2O. The protein operates within amino-acid biosynthesis; L-tryptophan biosynthesis; L-tryptophan from chorismate: step 4/5. The sequence is that of Indole-3-glycerol phosphate synthase from Bacillus thuringiensis subsp. konkukian (strain 97-27).